The following is a 303-amino-acid chain: Vesicle-trafficking protein SEC22c (303 aa).

The Cytoplasmic segment spans residues 1-183 (MSLILFACVV…EPAPSFRMEP (183 aa)). Residues 8-119 (CVVRVRDGLP…YAFLEFDNVI (112 aa)) form the Longin domain. A helical membrane pass occupies residues 184 to 204 (VTALGILSLILNIMCAALNLI). Over 205 to 223 (RGIHLAEHSLQVAHEEIGN) the chain is Lumenal. A helical transmembrane segment spans residues 224–244 (ILAFLIPFVACIFQCYLYLFY). Over 245-248 (SPAR) the chain is Cytoplasmic. Residues 249 to 269 (TMKVVLMLLFICLGNVYLHGL) traverse the membrane as a helical segment. Position 270 (Arg270) is a topological domain, lumenal. Residues 271-291 (NLWQILFHIGVAFLSSHQILT) form a helical membrane-spanning segment. Topologically, residues 292 to 303 (RQLQDKQSDCGV) are cytoplasmic.

Belongs to the synaptobrevin family.

The protein localises to the endoplasmic reticulum membrane. Its function is as follows. May be involved in vesicle transport between the ER and the Golgi complex. This Bos taurus (Bovine) protein is Vesicle-trafficking protein SEC22c (SEC22C).